Consider the following 269-residue polypeptide: 4-hydroxy-tetrahydrodipicolinate reductase (269 aa).

Residues 8–13 and glutamate 34 each bind NAD(+); that span reads GAGGRM. NADP(+) is bound at residue arginine 35. Residues 98 to 100 and 122 to 125 each bind NAD(+); these read GTT and ASNY. Residue histidine 155 is the Proton donor/acceptor of the active site. Residue histidine 156 participates in (S)-2,3,4,5-tetrahydrodipicolinate binding. Lysine 159 (proton donor) is an active-site residue. 165–166 contributes to the (S)-2,3,4,5-tetrahydrodipicolinate binding site; that stretch reads GT.

The protein belongs to the DapB family.

Its subcellular location is the cytoplasm. The catalysed reaction is (S)-2,3,4,5-tetrahydrodipicolinate + NAD(+) + H2O = (2S,4S)-4-hydroxy-2,3,4,5-tetrahydrodipicolinate + NADH + H(+). It catalyses the reaction (S)-2,3,4,5-tetrahydrodipicolinate + NADP(+) + H2O = (2S,4S)-4-hydroxy-2,3,4,5-tetrahydrodipicolinate + NADPH + H(+). Its pathway is amino-acid biosynthesis; L-lysine biosynthesis via DAP pathway; (S)-tetrahydrodipicolinate from L-aspartate: step 4/4. In terms of biological role, catalyzes the conversion of 4-hydroxy-tetrahydrodipicolinate (HTPA) to tetrahydrodipicolinate. The chain is 4-hydroxy-tetrahydrodipicolinate reductase from Haemophilus ducreyi (strain 35000HP / ATCC 700724).